The sequence spans 2301 residues: Genome polyprotein (2301 aa).

A zinc finger lies at cysteine 3–cysteine 14. Residues aspartate 30–aspartate 46 form an acidic region. Positions methionine 60–methionine 73 are theilo. Glycine 77 carries the N-myristoyl glycine; by host lipid modification. A disulfide bridge connects residues cysteine 501 and cysteine 503. The segment at tyrosine 1039–isoleucine 1045 is host EIF4E binding. The SF3 helicase domain maps to isoleucine 1281–isoleucine 1446. Residue glycine 1310–serine 1317 coordinates ATP. Residue tyrosine 1606 is modified to O-(5'-phospho-RNA)-tyrosine. In terms of domain architecture, Peptidase C3 spans asparagine 1634–isoleucine 1827. Catalysis depends on for protease 3C activity residues histidine 1678, aspartate 1712, and cysteine 1791. A RdRp catalytic domain is found at asparagine 2069–leucine 2187. Catalysis depends on for RdRp activity residues aspartate 2075 and aspartate 2173.

The protein belongs to the picornaviruses polyprotein family. Interacts with host EIF4E. Interacts with the leader protein. As to quaternary structure, interacts with host RAN; the complex L-RAN recruits cellular kinases responsible for the L-induced nucleocytoplasmic trafficking inhibition. The complex L-RAN can further bind to the host exportins XPO1/CRM1 and CSE1L/CAS. Interacts with the protein 2A. Interacts with host RNASEL; this interaction prevents RNASEL activation by its substrate 2'-5' oligoadenylates. In terms of processing, phosphorylated. Specific enzymatic cleavages by the viral protease in vivo yield a variety of precursors and mature proteins. The polyprotein seems to be cotranslationally cleaved at the 2A/2B junction by a ribosomal skip from one codon to the next without formation of a peptide bond. This process would release the P1-2A peptide from the translational complex. Post-translationally, during virion maturation, immature virions are rendered infectious following cleavage of VP0 into VP4 and VP2. This maturation seems to be an autocatalytic event triggered by the presence of RNA in the capsid and is followed by a conformational change of the particle. In terms of processing, uridylylated by the polymerase and is covalently linked to the 5'-end of genomic RNA. This uridylylated form acts as a nucleotide-peptide primer for the polymerase. Myristoylation is required during RNA encapsidation and formation of the mature virus particle.

The protein localises to the virion. Its subcellular location is the host cytoplasm. It is found in the host nucleus. It localises to the host nucleolus. The protein resides in the host cytoplasmic vesicle membrane. The enzyme catalyses RNA(n) + a ribonucleoside 5'-triphosphate = RNA(n+1) + diphosphate. It catalyses the reaction ATP + H2O = ADP + phosphate + H(+). The catalysed reaction is Selective cleavage of Gln-|-Gly bond in the poliovirus polyprotein. In other picornavirus reactions Glu may be substituted for Gln, and Ser or Thr for Gly.. Its function is as follows. Forms a complex with host RAN and probably binds to exportins carrying activated MAPK in order to mediate the hyperphosphorylation of host Phe/Gly containing nuclear pore proteins (Nups) resulting in cessation of active nucleocytoplasmic transport. Proteins with NLS signals fail to import, cellular mRNAs fail to export, and some proteins small enough for diffusion are not retained anymore (efflux). The resulting inhibition of cellular protein synthesis serves to ensure maximal viral gene expression and to evade host immune response. The leader protein also inhibits host interferon regulatory factor 3 (IRF3) dimerization, thereby blocking the transcriptional activation of IFN genes. Binds to host RNase L thereby preventing its activation by 2'-5' oligoadenylates in order to counteract the antiviral interferon-inducible OAS/RNase L pathway. Functionally, forms an icosahedral capsid of pseudo T=3 symmetry with capsid proteins VP2 and VP3. Together they form an icosahedral capsid composed of 60 copies of each VP1, VP2, and VP3, with a diameter of approximately 300 Angstroms. VP4 lies on the inner surface of the protein shell formed by VP1, VP2 and VP3. All the three latter proteins contain a beta-sheet structure called beta-barrel jelly roll. VP1 is situated at the 12 fivefold axes, whereas VP2 and VP3 are located at the quasi-sixfold axes. In terms of biological role, lies on the inner surface of the capsid shell. After binding to the host receptor, the capsid undergoes conformational changes. Capsid protein VP4 is released, capsid protein VP1 N-terminus is externalized, and together, they shape a pore in the host membrane through which the viral genome is translocated into the host cell cytoplasm. After genome has been released, the channel shrinks. VP0 precursor is a component of immature procapsids. Its function is as follows. Involved in host translation shutoff by inhibiting cap-dependent mRNA translation. Nuclear localization is required for this function. The resulting inhibition of cellular protein synthesis serves to ensure maximal viral gene expression and to evade host immune response. Inhibits the phosphorylation of the leader protein. Functionally, affects membrane integrity and causes an increase in membrane permeability. In terms of biological role, associates with and induces structural rearrangements of intracellular membranes. It displays RNA-binding, nucleotide binding and NTPase activities. Serves as membrane anchor via its hydrophobic domain. Its function is as follows. Forms a primer, VPg-pU, which is utilized by the polymerase for the initiation of RNA chains. Functionally, cysteine protease that generates mature viral proteins from the precursor polyprotein. In addition to its proteolytic activity, it binds to viral RNA, and thus influences viral genome replication. RNA and substrate cooperatively bind to the protease. Cleaves host PABP1, this cleavage is important for viral replication. In terms of biological role, replicates the genomic and antigenomic RNAs by recognizing replications specific signals. Performs VPg uridylylation. In Theiler's murine encephalomyelitis virus (strain DA) (TMEV), this protein is Genome polyprotein.